Consider the following 259-residue polypeptide: Eukaryotic translation initiation factor 3 subunit G-2 (259 aa).

The region spanning 179 to 257 is the RRM domain; that stretch reads SAVRISNLSE…LILSVEWSKP (79 aa).

It belongs to the eIF-3 subunit G family. As to quaternary structure, component of the eukaryotic translation initiation factor 3 (eIF-3) complex. The eIF-3 complex interacts with pix.

The protein localises to the cytoplasm. RNA-binding component of the eukaryotic translation initiation factor 3 (eIF-3) complex, which is involved in protein synthesis of a specialized repertoire of mRNAs and, together with other initiation factors, stimulates binding of mRNA and methionyl-tRNAi to the 40S ribosome. The eIF-3 complex specifically targets and initiates translation of a subset of mRNAs involved in cell proliferation. This subunit can bind 18S rRNA. This Drosophila mojavensis (Fruit fly) protein is Eukaryotic translation initiation factor 3 subunit G-2.